We begin with the raw amino-acid sequence, 100 residues long: Integration host factor subunit alpha (100 aa).

Belongs to the bacterial histone-like protein family. In terms of assembly, heterodimer of an alpha and a beta chain.

In terms of biological role, this protein is one of the two subunits of integration host factor, a specific DNA-binding protein that functions in genetic recombination as well as in transcriptional and translational control. This is Integration host factor subunit alpha from Methylobacillus flagellatus (strain ATCC 51484 / DSM 6875 / VKM B-1610 / KT).